We begin with the raw amino-acid sequence, 149 residues long: 3-dehydroquinate dehydratase (149 aa).

Tyr-26 (proton acceptor) is an active-site residue. Residues Asn-77, His-83, and Asp-90 each contribute to the substrate site. The Proton donor role is filled by His-103. Residues 104 to 105 (LS) and Arg-114 contribute to the substrate site.

The protein belongs to the type-II 3-dehydroquinase family. In terms of assembly, homododecamer.

The enzyme catalyses 3-dehydroquinate = 3-dehydroshikimate + H2O. It participates in metabolic intermediate biosynthesis; chorismate biosynthesis; chorismate from D-erythrose 4-phosphate and phosphoenolpyruvate: step 3/7. Its function is as follows. Catalyzes a trans-dehydration via an enolate intermediate. The chain is 3-dehydroquinate dehydratase from Aliivibrio salmonicida (strain LFI1238) (Vibrio salmonicida (strain LFI1238)).